We begin with the raw amino-acid sequence, 284 residues long: tRNA pseudouridine synthase A (284 aa).

The active-site Nucleophile is the Asp-62. Residue Tyr-123 coordinates substrate.

Belongs to the tRNA pseudouridine synthase TruA family. As to quaternary structure, homodimer.

It catalyses the reaction uridine(38/39/40) in tRNA = pseudouridine(38/39/40) in tRNA. Its function is as follows. Formation of pseudouridine at positions 38, 39 and 40 in the anticodon stem and loop of transfer RNAs. In Streptomyces griseus subsp. griseus (strain JCM 4626 / CBS 651.72 / NBRC 13350 / KCC S-0626 / ISP 5235), this protein is tRNA pseudouridine synthase A.